A 206-amino-acid polypeptide reads, in one-letter code: MKKLLCAVLLSPLLYSNAVLADDAKQLRETLNGTESLKADFKQTVTDINKKVIQTGAGVFALAHPNQFYWHLTAPDESQIVADGKDLWIYNPFAEEVVIMDFAEAINASPIALLVHRDDATWSQYSVAKKQDCYEIKPKATDAGISSVNVCFNKGTLNKFNVLDDKGNQSQFDLSNQHSISAADKALFKFVLPENVDVDDQRLKSQ.

The first 21 residues, methionine 1–alanine 21, serve as a signal peptide directing secretion.

This sequence belongs to the LolA family. As to quaternary structure, monomer.

It localises to the periplasm. In terms of biological role, participates in the translocation of lipoproteins from the inner membrane to the outer membrane. Only forms a complex with a lipoprotein if the residue after the N-terminal Cys is not an aspartate (The Asp acts as a targeting signal to indicate that the lipoprotein should stay in the inner membrane). The sequence is that of Outer-membrane lipoprotein carrier protein from Shewanella sp. (strain ANA-3).